A 379-amino-acid chain; its full sequence is ORC1-type DNA replication protein 2 (379 aa).

ATP-binding positions include 69-73 (TGKTT), Tyr211, and Arg223.

It belongs to the CDC6/cdc18 family. Interacts with MCM. In terms of processing, autophosphorylated on a serine. Phosphorylation is inhibited by binding to MCM. Both single-stranded DNA and double-stranded DNA inhibit the phosphorylation reaction.

In terms of biological role, involved in regulation of DNA replication. Dissociates the MCM complex and inhibits the MCM helicase activity, suggesting that it may function as a helicase loader. Binds to both specific and random double-stranded or single-stranded DNA. This is ORC1-type DNA replication protein 2 (cdc6-2) from Methanothermobacter thermautotrophicus (strain ATCC 29096 / DSM 1053 / JCM 10044 / NBRC 100330 / Delta H) (Methanobacterium thermoautotrophicum).